The sequence spans 108 residues: Zinc finger protein 475 (108 aa).

2 consecutive C2HC/C3H-type zinc fingers follow at residues 6–35 (PAVVCYICGREYGTKSISIHEPQCLKKWHN) and 79–108 (QLVPCNVCGRTFLPDRLIVHQRSCKPKAAK). Residues cysteine 10, cysteine 13, histidine 25, cysteine 29, cysteine 83, cysteine 86, histidine 98, and cysteine 102 each contribute to the Zn(2+) site.

Requires Zn(2+) as cofactor.

This is Zinc finger protein 475 from Homo sapiens (Human).